We begin with the raw amino-acid sequence, 461 residues long: Steroidogenic factor 1 (461 aa).

Positions 10-85 form a DNA-binding region, nuclear receptor; sequence DELCPVCGDK…VGMRLEAVRA (76 aa). The segment at 13–33 adopts an NR C4-type zinc-finger fold; sequence CPVCGDKVSGYHYGLLTCESC. N6-acetyllysine occurs at positions 34, 38, and 72. The NR C4-type zinc finger occupies 49-73; sequence CTESQSCKIDKTLRKRCPFCRFQKC. Residue Lys-119 forms a Glycyl lysine isopeptide (Lys-Gly) (interchain with G-Cter in SUMO) linkage. Positions 119-153 are disordered; the sequence is KLETGPPMGVPPPPPPPPDYMLPPGLHVPEPKGLA. The segment covering 126–139 has biased composition (pro residues); the sequence is MGVPPPPPPPPDYM. Lys-194 participates in a covalent cross-link: Glycyl lysine isopeptide (Lys-Gly) (interchain with G-Cter in SUMO). Residue Ser-203 is modified to Phosphoserine; by CDK7. Residues 222–459 enclose the NR LBD domain; the sequence is GVPELILQLL…NLLIEMLQAK (238 aa). The a 1,2-diacyl-sn-glycero-3-phosphocholine site is built by Gly-341, Tyr-436, and Lys-440.

It belongs to the nuclear hormone receptor family. NR5 subfamily. In terms of assembly, binds DNA as a monomer. Part of a complex consisting of SFPQ, NONO and NR5A1. Interacts with NR0B2. Interacts with DGKQ and CDK7. Binds to and activated by HIPK3. Acetylation stimulates the transcriptional activity. In terms of processing, sumoylation reduces CDK7-mediated phosphorylation on Ser-203. Post-translationally, phosphorylated on Ser-203 by CDK7. This phosphorylation promotes transcriptional activity.

The protein localises to the nucleus. Transcriptional activator. Seems to be essential for sexual differentiation and formation of the primary steroidogenic tissues. Binds to the Ad4 site found in the promoter region of steroidogenic P450 genes such as CYP11A, CYP11B and CYP21B. Also regulates the AMH/Muellerian inhibiting substance gene as well as the AHCH and STAR genes. 5'-YCAAGGYC-3' and 5'-RRAGGTCA-3' are the consensus sequences for the recognition by NR5A1. The SFPQ-NONO-NR5A1 complex binds to the CYP17 promoter and regulates basal and cAMP-dependent transcriptional activity. Binds phospholipids with a phosphatidylinositol (PI) headgroup, in particular PI(3,4)P2 and PI(3,4,5)P3. Activated by the phosphorylation of NR5A1 by HIPK3 leading to increased steroidogenic gene expression upon cAMP signaling pathway stimulation. This is Steroidogenic factor 1 (NR5A1) from Equus caballus (Horse).